A 216-amino-acid chain; its full sequence is Invasion protein InvF (216 aa).

An HTH araC/xylS-type domain is found at 112 to 210 (YWLVGYLLAQ…GVSPRKLSNI (99 aa)). 2 DNA-binding regions (H-T-H motif) span residues 129-150 (RMLG…SRAL) and 177-200 (ITQL…KELI).

Its function is as follows. Transcriptional regulator required for the expression of several genes encoding type III secretion system SPI1 effector proteins. The interaction with SicA is necessary for the activation of sigDE (sopB pipC), sicAsipBCDA, and sopE. This is Invasion protein InvF (invF) from Salmonella typhi.